The sequence spans 363 residues: Dual-specificity RNA methyltransferase RlmN (363 aa).

E102 functions as the Proton acceptor in the catalytic mechanism. In terms of domain architecture, Radical SAM core spans 108–349; the sequence is EKKRATLCVS…KNRGQDIGAA (242 aa). Residues C115 and C350 are joined by a disulfide bond. 3 residues coordinate [4Fe-4S] cluster: C122, C126, and C129. S-adenosyl-L-methionine is bound by residues 174–175, S206, 228–230, and N307; these read GE and SLH. C350 functions as the S-methylcysteine intermediate in the catalytic mechanism.

It belongs to the radical SAM superfamily. RlmN family. It depends on [4Fe-4S] cluster as a cofactor.

It localises to the cytoplasm. The catalysed reaction is adenosine(2503) in 23S rRNA + 2 reduced [2Fe-2S]-[ferredoxin] + 2 S-adenosyl-L-methionine = 2-methyladenosine(2503) in 23S rRNA + 5'-deoxyadenosine + L-methionine + 2 oxidized [2Fe-2S]-[ferredoxin] + S-adenosyl-L-homocysteine. The enzyme catalyses adenosine(37) in tRNA + 2 reduced [2Fe-2S]-[ferredoxin] + 2 S-adenosyl-L-methionine = 2-methyladenosine(37) in tRNA + 5'-deoxyadenosine + L-methionine + 2 oxidized [2Fe-2S]-[ferredoxin] + S-adenosyl-L-homocysteine. Functionally, specifically methylates position 2 of adenine 2503 in 23S rRNA and position 2 of adenine 37 in tRNAs. m2A2503 modification seems to play a crucial role in the proofreading step occurring at the peptidyl transferase center and thus would serve to optimize ribosomal fidelity. This is Dual-specificity RNA methyltransferase RlmN from Buchnera aphidicola subsp. Schizaphis graminum (strain Sg).